Here is a 394-residue protein sequence, read N- to C-terminus: Protein TsgA homolog (394 aa).

The next 12 helical transmembrane spans lie at tryptophan 11–methionine 31, phenylalanine 51–proline 71, leucine 76–leucine 96, isoleucine 101–isoleucine 121, leucine 134–isoleucine 154, tryptophan 162–cysteine 182, methionine 206–isoleucine 226, glutamine 246–leucine 266, isoleucine 274–asparagine 294, isoleucine 302–leucine 322, phenylalanine 334–valine 354, and leucine 363–phenylalanine 383.

Belongs to the major facilitator superfamily. TsgA family.

Its subcellular location is the cell inner membrane. This is Protein TsgA homolog from Yersinia enterocolitica serotype O:8 / biotype 1B (strain NCTC 13174 / 8081).